The sequence spans 201 residues: uncharacterized protein (201 aa).

A helical transmembrane segment spans residues 11–31 (IWKSLYLLIIVGMLYIGYILI).

Its subcellular location is the membrane. This is an uncharacterized protein from Rickettsia prowazekii (strain Madrid E).